The primary structure comprises 534 residues: Lysophosphatidylcholine acyltransferase 1 (534 aa).

The segment at 1-25 (MRLRGRGPRAAPSSSSGAGDARRLA) is disordered. The Cytoplasmic segment spans residues 1-57 (MRLRGRGPRAAPSSSSGAGDARRLAPPGRNPFVHELRLSALQKAQVAFMTLTLFPIR). Low complexity predominate over residues 8-19 (PRAAPSSSSGAG). The helical; Signal-anchor for type II membrane protein transmembrane segment at 58 to 78 (LLFAAFMMLLAWPFALLASLG) threads the bilayer. The Lumenal segment spans residues 79 to 534 (PPDKEPEQPL…GRKNSCKKAD (456 aa)). Positions 135–140 (HSSYFD) match the HXXXXD motif motif. 2 consecutive EF-hand domains span residues 379–414 (PVSD…VCRP) and 451–486 (VSEL…YPDY). Aspartate 392, serine 394, glutamate 398, and glutamate 403 together coordinate Ca(2+). The short motif at 531–534 (KKAD) is the Di-lysine motif element.

It belongs to the 1-acyl-sn-glycerol-3-phosphate acyltransferase family. In terms of tissue distribution, predominantly expressed in lung where it is enriched in alveolar type II cells. Expressed at lower levels in spleen and brain. Also detected in erythroleukemic cells and reticulocytes. Weakly or not expressed in other tissues.

Its subcellular location is the endoplasmic reticulum membrane. The protein resides in the golgi apparatus membrane. It localises to the cell membrane. The protein localises to the lipid droplet. The enzyme catalyses a 1-acyl-sn-glycero-3-phosphocholine + an acyl-CoA = a 1,2-diacyl-sn-glycero-3-phosphocholine + CoA. The catalysed reaction is a 1-O-alkyl-sn-glycero-3-phosphocholine + acetyl-CoA = a 1-O-alkyl-2-acetyl-sn-glycero-3-phosphocholine + CoA. It carries out the reaction a 1-acyl-sn-glycero-3-phosphate + an acyl-CoA = a 1,2-diacyl-sn-glycero-3-phosphate + CoA. It catalyses the reaction a 1-O-(1Z-alkenyl)-sn-glycero-3-phosphocholine + an acyl-CoA = a 1-O-(1Z-alkenyl)-2-acyl-sn-glycero-3-phosphocholine + CoA. The enzyme catalyses 1-acyl-sn-glycero-3-phospho-(1'-sn-glycerol) + an acyl-CoA = a 1,2-diacyl-sn-glycero-3-phospho-(1'-sn-glycerol) + CoA. The catalysed reaction is 1-hexadecanoyl-sn-glycero-3-phosphocholine + hexadecanoyl-CoA = 1,2-dihexadecanoyl-sn-glycero-3-phosphocholine + CoA. It carries out the reaction 1-O-hexadecyl-sn-glycero-3-phosphocholine + hexadecanoyl-CoA = 1-O-hexadecyl-2-hexadecanoyl-sn-glycero-3-phosphocholine + CoA. It catalyses the reaction a 1-O-(1Z-alkenyl)-sn-glycero-3-phosphocholine + hexadecanoyl-CoA = 1-O-(1Z)-alkenyl-2-hexadecanoyl-sn-glycero-3-phosphocholine + CoA. The enzyme catalyses 1-hexadecanoyl-sn-glycero-3-phospho-(1'-sn-glycerol) + hexadecanoyl-CoA = 1,2-dihexadecanoyl-sn-glycero-3-phospho-(1'-sn-glycerol) + CoA. The catalysed reaction is 1-dodecanoyl-sn-glycero-3-phosphocholine + hexadecanoyl-CoA = 1-dodecanoyl-2-hexadecanoyl-sn-glycero-3-phosphocholine + CoA. It carries out the reaction 1-tetradecanoyl-sn-glycero-3-phosphocholine + hexadecanoyl-CoA = 1-tetradecanoyl-2-hexadecanoyl-sn-glycero-3-phosphocholine + CoA. It catalyses the reaction 1-O-octadecyl-sn-glycero-3-phosphocholine + hexadecanoyl-CoA = 1-O-octadecyl-2-hexadecanoyl-sn-glycero-3-phosphocholine + CoA. The enzyme catalyses 1-octadecanoyl-sn-glycero-3-phosphocholine + hexadecanoyl-CoA = 1-octadecanoyl-2-hexadecanoyl-sn-glycero-3-phosphocholine + CoA. The catalysed reaction is 1-(9Z-octadecenoyl)-sn-glycero-3-phosphocholine + hexadecanoyl-CoA = 1-(9Z-octadecenoyl)-2-hexadecanoyl-sn-glycero-3-phosphocholine + CoA. It carries out the reaction 1-eicosanoyl-sn-glycero-3-phosphocholine + hexadecanoyl-CoA = 1-eicosanoyl-2-hexadecanoyl-sn-glycero-3-phosphocholine + CoA. It catalyses the reaction hexanoyl-CoA + 1-hexadecanoyl-sn-glycero-3-phosphocholine = 1-hexadecanoyl-2-hexanoyl-sn-glycero-3-phosphocholine + CoA. The enzyme catalyses octanoyl-CoA + 1-hexadecanoyl-sn-glycero-3-phosphocholine = 1-hexadecanoyl-2-octanoyl-sn-glycero-3-phosphocholine + CoA. The catalysed reaction is decanoyl-CoA + 1-hexadecanoyl-sn-glycero-3-phosphocholine = 1-hexadecanoyl-2-decanoyl-sn-glycero-3-phosphocholine + CoA. It carries out the reaction dodecanoyl-CoA + 1-hexadecanoyl-sn-glycero-3-phosphocholine = 1-hexadecanoyl-2-dodecanoyl-sn-glycero-3-phosphocholine + CoA. It catalyses the reaction tetradecanoyl-CoA + 1-hexadecanoyl-sn-glycero-3-phosphocholine = 1-hexadecanoyl-2-tetradecanoyl-sn-glycero-3-phosphocholine + CoA. The enzyme catalyses 1-hexadecanoyl-sn-glycero-3-phosphocholine + (9Z)-octadecenoyl-CoA = 1-hexadecanoyl-2-(9Z-octadecenoyl)-sn-glycero-3-phosphocholine + CoA. The catalysed reaction is (9Z,12Z)-octadecadienoyl-CoA + 1-hexadecanoyl-sn-glycero-3-phosphocholine = 1-hexadecanoyl-2-(9Z,12Z-octadecadienoyl)-sn-glycero-3-phosphocholine + CoA. It carries out the reaction (4Z,7Z,10Z,13Z,16Z,19Z)-docosahexaenoyl-CoA + 1-hexadecanoyl-sn-glycero-3-phosphocholine = 1-hexadecanoyl-2-(4Z,7Z,10Z,13Z,16Z,19Z-docosahexaenoyl)-sn-glycero-3-phosphocholine + CoA. It catalyses the reaction 1-hexadecanoyl-sn-glycero-3-phosphocholine + acetyl-CoA = 1-hexadecanoyl-2-acetyl-sn-glycero-3-phosphocholine + CoA. The enzyme catalyses eicosanoyl-CoA + 1-hexadecanoyl-sn-glycero-3-phosphocholine = 1-hexadecanoyl-2-eicosanoyl-sn-glycero-3-phosphocholine + CoA. The catalysed reaction is 1-O-hexadecyl-sn-glycero-3-phosphocholine + acetyl-CoA = 1-O-hexadecyl-2-acetyl-sn-glycero-3-phosphocholine + CoA. It carries out the reaction a 1-acyl-sn-glycero-3-phosphocholine + hexadecanoyl-CoA = 1-acyl-2-hexadecanoyl-sn-glycero-3-phosphocholine + CoA. It catalyses the reaction a 1-acyl-sn-glycero-3-phosphate + hexadecanoyl-CoA = 1-acyl-2-hexadecanoyl-sn-glycero-3-phosphate + CoA. The enzyme catalyses 1-acyl-sn-glycero-3-phospho-(1'-sn-glycerol) + hexadecanoyl-CoA = 1-acyl-2-hexadecanoyl-sn-glycero-3-phospho-(1'-sn-glycerol) + CoA. Its pathway is lipid metabolism; phospholipid metabolism. Its activity is regulated as follows. Not activated by inflammatory stimulation. Inhibited by Cu(2+), Fe(2+), Ca(2+) and Mg(2+). Activity is not affected by Co(2+) or Mn(2+). Functionally, exhibits both acyltransferase and acetyltransferase activities. Activity is calcium-independent. Catalyzes the conversion of lysophosphatidylcholine (1-acyl-sn-glycero-3-phosphocholine or LPC) into phosphatidylcholine (1,2-diacyl-sn-glycero-3-phosphocholine or PC). Catalyzes the conversion 1-acyl-sn-glycerol-3-phosphate (lysophosphatidic acid or LPA) into 1,2-diacyl-sn-glycerol-3-phosphate (phosphatidic acid or PA) by incorporating an acyl moiety at the sn-2 position of the glycerol backbone. Displays a clear preference for saturated fatty acyl-CoAs, and 1-myristoyl or 1-palmitoyl LPC as acyl donors and acceptors, respectively. Involved in platelet-activating factor (PAF) biosynthesis by catalyzing the conversion of the PAF precursor, 1-O-alkyl-sn-glycero-3-phosphocholine (lyso-PAF) into 1-O-alkyl-2-acetyl-sn-glycero-3-phosphocholine (PAF). May synthesize phosphatidylcholine in pulmonary surfactant, thereby playing a pivotal role in respiratory physiology. Involved in the regulation of lipid droplet number and size. This chain is Lysophosphatidylcholine acyltransferase 1 (Lpcat1), found in Mus musculus (Mouse).